The chain runs to 756 residues: Probable chemoreceptor y4sI (756 aa).

The next 2 helical transmembrane spans lie at 26–46 (VCVA…TSVA) and 330–350 (LIKI…MAIL). 2 consecutive HAMP domains span residues 353–406 (RSIS…ARVA) and 434–486 (DEQA…ETIR). Residues 491-720 (QAASMSSIVS…ESDAACRSLN (230 aa)) enclose the Methyl-accepting transducer domain. Residues 736–756 (GGGSSTRQPQSPPTQRYFMSR) are disordered.

It belongs to the methyl-accepting chemotaxis (MCP) protein family.

Its subcellular location is the cell membrane. Its function is as follows. Chemotactic-signal transducers respond to changes in the concentration of attractants and repellents in the environment, transduce a signal from the outside to the inside of the cell, and facilitate sensory adaptation through the variation of the level of methylation. Attractants increase the level of methylation while repellents decrease the level of methylation. In Sinorhizobium fredii (strain NBRC 101917 / NGR234), this protein is Probable chemoreceptor y4sI.